A 219-amino-acid polypeptide reads, in one-letter code: Ribosomal RNA small subunit methyltransferase I (219 aa).

This sequence belongs to the methyltransferase superfamily. RsmI family.

It localises to the cytoplasm. The catalysed reaction is cytidine(1402) in 16S rRNA + S-adenosyl-L-methionine = 2'-O-methylcytidine(1402) in 16S rRNA + S-adenosyl-L-homocysteine + H(+). In terms of biological role, catalyzes the 2'-O-methylation of the ribose of cytidine 1402 (C1402) in 16S rRNA. The polypeptide is Ribosomal RNA small subunit methyltransferase I (Coprothermobacter proteolyticus (strain ATCC 35245 / DSM 5265 / OCM 4 / BT)).